The following is a 293-amino-acid chain: Nucleotide-binding protein DvMF_0424 (293 aa).

13–20 (GLSGAGKS) contacts ATP. Residue 65-68 (DLRE) coordinates GTP.

This sequence belongs to the RapZ-like family.

In terms of biological role, displays ATPase and GTPase activities. This Nitratidesulfovibrio vulgaris (strain DSM 19637 / Miyazaki F) (Desulfovibrio vulgaris) protein is Nucleotide-binding protein DvMF_0424.